Consider the following 187-residue polypeptide: Orotate phosphoribosyltransferase (187 aa).

5-phospho-alpha-D-ribose 1-diphosphate is bound by residues R98, K99, K102, H104, and 128–136 (EDVTTTGGS). Orotate is bound by residues T132 and R160.

This sequence belongs to the purine/pyrimidine phosphoribosyltransferase family. PyrE subfamily. In terms of assembly, homodimer. Mg(2+) serves as cofactor.

The catalysed reaction is orotidine 5'-phosphate + diphosphate = orotate + 5-phospho-alpha-D-ribose 1-diphosphate. The protein operates within pyrimidine metabolism; UMP biosynthesis via de novo pathway; UMP from orotate: step 1/2. Its function is as follows. Catalyzes the transfer of a ribosyl phosphate group from 5-phosphoribose 1-diphosphate to orotate, leading to the formation of orotidine monophosphate (OMP). The protein is Orotate phosphoribosyltransferase of Bradyrhizobium diazoefficiens (strain JCM 10833 / BCRC 13528 / IAM 13628 / NBRC 14792 / USDA 110).